The chain runs to 357 residues: Alanine racemase (357 aa).

K33 acts as the Proton acceptor; specific for D-alanine in catalysis. K33 bears the N6-(pyridoxal phosphate)lysine mark. Position 129 (R129) interacts with substrate. Y253 (proton acceptor; specific for L-alanine) is an active-site residue. M301 contacts substrate.

Belongs to the alanine racemase family. The cofactor is pyridoxal 5'-phosphate.

The enzyme catalyses L-alanine = D-alanine. Its pathway is amino-acid biosynthesis; D-alanine biosynthesis; D-alanine from L-alanine: step 1/1. Its function is as follows. Catalyzes the interconversion of L-alanine and D-alanine. May also act on other amino acids. In Pseudomonas syringae pv. syringae (strain B728a), this protein is Alanine racemase (alr).